A 376-amino-acid chain; its full sequence is Alcohol dehydrogenase 1 (376 aa).

Position 2 is an N-acetylserine (Ser-2). Zn(2+)-binding residues include Cys-47, His-68, Cys-98, Cys-101, Cys-104, Cys-112, and Cys-176. Residues 201 to 206 (GLGGVG), Asp-225, Lys-230, 294 to 296 (VGV), and Arg-371 each bind NAD(+).

The protein belongs to the zinc-containing alcohol dehydrogenase family. Class-I subfamily. Homodimer. Zn(2+) is required as a cofactor.

It is found in the cytoplasm. It catalyses the reaction a primary alcohol + NAD(+) = an aldehyde + NADH + H(+). It carries out the reaction a secondary alcohol + NAD(+) = a ketone + NADH + H(+). This chain is Alcohol dehydrogenase 1 (ADH1), found in Gallus gallus (Chicken).